The sequence spans 832 residues: Mucosa-associated lymphoid tissue lymphoma translocation protein 1 homolog (832 aa).

The interval 1 to 39 (MSLWGQPLQASPPLAVRQPPTASSGPSTSPPAGATLNRL) is disordered. Ser-2 carries the post-translational modification N-acetylserine. The span at 19–39 (PPTASSGPSTSPPAGATLNRL) shows a compositional bias: low complexity. The 88-residue stretch at 45–132 (RRLSESLDRA…EVLPLLNPPG (88 aa)) folds into the Death domain. 2 consecutive Ig-like C2-type domains span residues 131–207 (PGLK…FEFS) and 218–314 (AEVT…KKAE). Ser-141 bears the Phosphoserine mark. 2 cysteine pairs are disulfide-bonded: Cys-154-Cys-196 and Cys-257-Cys-299. The tract at residues 356-570 (IGNMSYWEHP…SLSEKRALTD (215 aa)) is caspase-like. The Nuclear export signal signature appears at 377-384 (LTNLLRQL). Catalysis depends on residues His-423 and Cys-472.

It belongs to the peptidase C14B family. Homooligomer; forms oligomers which bind to TRAF6. Forms a complex with CARD14 and MALT1; resulting in the formation of a CBM (CARD14-BCL10-MALT1) complex. Forms a complex with CARD11 and MALT1; resulting in the formation of a CBM (CARD11-BCL10-MALT1) complex. Forms a complex with CARD9 and MALT1; resulting in the formation of a CBM (CARD9-BCL10-MALT1) complex.

It localises to the cytoplasm. The protein localises to the perinuclear region. The protein resides in the nucleus. Functionally, protease that enhances BCL10-induced activation: acts via formation of CBM complexes that channel adaptive and innate immune signaling downstream of CARD domain-containing proteins (CARD9, CARD11 and CARD14) to activate NF-kappa-B and MAP kinase p38 pathways which stimulate expression of genes encoding pro-inflammatory cytokines and chemokines. Mediates BCL10 cleavage: MALT1-dependent BCL10 cleavage plays an important role in T-cell antigen receptor-induced integrin adhesion. Involved in the induction of T helper 17 cells (Th17) differentiation. Cleaves RC3H1 and ZC3H12A in response to T-cell receptor (TCR) stimulation which releases their cooperatively repressed targets to promote Th17 cell differentiation. Also mediates cleavage of N4BP1 in T-cells following TCR-mediated activation, leading to N4BP1 inactivation. May also have ubiquitin ligase activity: binds to TRAF6, inducing TRAF6 oligomerization and activation of its ligase activity. The sequence is that of Mucosa-associated lymphoid tissue lymphoma translocation protein 1 homolog from Mus musculus (Mouse).